Reading from the N-terminus, the 271-residue chain is Zinc finger CCHC domain-containing protein 9 (271 aa).

Residues 1–40 are disordered; the sequence is MTRWARVSTTYNKRPLPATSWEDMKKGSFEGTSQNLPKRK. At S48 the chain carries Phosphoserine. 4 CCHC-type zinc fingers span residues 128–145, 155–172, 184–201, and 211–228; these read MVCF…DCPA, GICY…KCKA, AKCF…SCPD, and GGCK…DCPE.

It localises to the nucleus. The protein resides in the nucleolus. In terms of biological role, may down-regulate transcription mediated by NF-kappa-B and the serum response element. The protein is Zinc finger CCHC domain-containing protein 9 (ZCCHC9) of Homo sapiens (Human).